The following is a 370-amino-acid chain: Protein commissureless 1 (370 aa).

Topologically, residues 1-136 (MISTTDYPTV…DADMHVIINY (136 aa)) are extracellular. The tract at residues 108 to 131 (LRDRSEESGESSWWSQIFGDADMH) is required for vesicular localization. The helical transmembrane segment at 137–157 (LWIGVVSSLVILSLVFILFSC) threads the bilayer. The Cytoplasmic segment spans residues 158-370 (YFYRKFRTWK…CASLVVVVAA (213 aa)). Short sequence motifs (PY-motif) lie at residues 220–223 (PPCY) and 229–232 (LPSY). Residues 227–237 (TGLPSYDEALH) are interaction with Nedd4. The segment at 287-312 (VEEDKADSSSSTSASASPSSSESSNL) is disordered. Over residues 294–312 (SSSSTSASASPSSSESSNL) the composition is skewed to low complexity.

Belongs to the commissureless family. In terms of assembly, interacts (probably via PY-motifs) with Nedd4 (via WW2 domain). Interacts with Robo. Post-translationally, ubiquitinated by Nedd4; which promotes endocytosis of the comm/robo complex and comm proteasomal degradation. Not ubiquitinated by Nedd4.

It localises to the cytoplasmic vesicle membrane. Its subcellular location is the cell membrane. In terms of biological role, controls axon guidance across the CNS midline by preventing the delivery of Robo to the growth cone. The chain is Protein commissureless 1 from Drosophila melanogaster (Fruit fly).